The sequence spans 469 residues: Chromosomal replication initiator protein DnaA (469 aa).

Residues 1–71 (MKEFWQTCVS…EALAAEWYQR (71 aa)) form a domain I, interacts with DnaA modulators region. A domain II region spans residues 71–131 (RPVQVTFELP…DAANIVYERS (61 aa)). Residues 132–348 (RLNTDLTFEN…GALRKVLAYA (217 aa)) form a domain III, AAA+ region region. The ATP site is built by G176, G178, K179, and T180. The domain IV, binds dsDNA stretch occupies residues 349 to 469 (RFHGRDVLTV…LHVLEQTLKG (121 aa)).

This sequence belongs to the DnaA family. In terms of assembly, oligomerizes as a right-handed, spiral filament on DNA at oriC.

The protein resides in the cytoplasm. Its function is as follows. Plays an essential role in the initiation and regulation of chromosomal replication. ATP-DnaA binds to the origin of replication (oriC) to initiate formation of the DNA replication initiation complex once per cell cycle. Binds the DnaA box (a 9 base pair repeat at the origin) and separates the double-stranded (ds)DNA. Forms a right-handed helical filament on oriC DNA; dsDNA binds to the exterior of the filament while single-stranded (ss)DNA is stabiized in the filament's interior. The ATP-DnaA-oriC complex binds and stabilizes one strand of the AT-rich DNA unwinding element (DUE), permitting loading of DNA polymerase. After initiation quickly degrades to an ADP-DnaA complex that is not apt for DNA replication. Binds acidic phospholipids. This is Chromosomal replication initiator protein DnaA from Bordetella parapertussis (strain 12822 / ATCC BAA-587 / NCTC 13253).